Here is a 225-residue protein sequence, read N- to C-terminus: Probable septum site-determining protein MinC (225 aa).

It belongs to the MinC family. Interacts with MinD and FtsZ.

In terms of biological role, cell division inhibitor that blocks the formation of polar Z ring septums. Rapidly oscillates between the poles of the cell to destabilize FtsZ filaments that have formed before they mature into polar Z rings. Prevents FtsZ polymerization. The chain is Probable septum site-determining protein MinC from Listeria welshimeri serovar 6b (strain ATCC 35897 / DSM 20650 / CCUG 15529 / CIP 8149 / NCTC 11857 / SLCC 5334 / V8).